The following is a 203-amino-acid chain: Nucleoside triphosphate pyrophosphatase (203 aa).

Asp78 acts as the Proton acceptor in catalysis.

This sequence belongs to the Maf family. A divalent metal cation is required as a cofactor.

The protein localises to the cytoplasm. It carries out the reaction a ribonucleoside 5'-triphosphate + H2O = a ribonucleoside 5'-phosphate + diphosphate + H(+). The catalysed reaction is a 2'-deoxyribonucleoside 5'-triphosphate + H2O = a 2'-deoxyribonucleoside 5'-phosphate + diphosphate + H(+). Functionally, nucleoside triphosphate pyrophosphatase. May have a dual role in cell division arrest and in preventing the incorporation of modified nucleotides into cellular nucleic acids. This Prochlorococcus marinus (strain MIT 9301) protein is Nucleoside triphosphate pyrophosphatase.